An 83-amino-acid chain; its full sequence is Exodeoxyribonuclease 7 small subunit (83 aa).

This sequence belongs to the XseB family. As to quaternary structure, heterooligomer composed of large and small subunits.

The protein resides in the cytoplasm. It carries out the reaction Exonucleolytic cleavage in either 5'- to 3'- or 3'- to 5'-direction to yield nucleoside 5'-phosphates.. Its function is as follows. Bidirectionally degrades single-stranded DNA into large acid-insoluble oligonucleotides, which are then degraded further into small acid-soluble oligonucleotides. The polypeptide is Exodeoxyribonuclease 7 small subunit (Sinorhizobium medicae (strain WSM419) (Ensifer medicae)).